We begin with the raw amino-acid sequence, 287 residues long: ATP synthase gamma chain (287 aa).

Belongs to the ATPase gamma chain family. In terms of assembly, F-type ATPases have 2 components, CF(1) - the catalytic core - and CF(0) - the membrane proton channel. CF(1) has five subunits: alpha(3), beta(3), gamma(1), delta(1), epsilon(1). CF(0) has three main subunits: a, b and c.

It localises to the cell inner membrane. Produces ATP from ADP in the presence of a proton gradient across the membrane. The gamma chain is believed to be important in regulating ATPase activity and the flow of protons through the CF(0) complex. This is ATP synthase gamma chain from Geobacter metallireducens (strain ATCC 53774 / DSM 7210 / GS-15).